The chain runs to 546 residues: Chaperonin GroEL 2 (546 aa).

Residues 30-33 (TLGP), K51, 87-91 (DGTTT), G415, 479-481 (NAA), and D495 contribute to the ATP site.

It belongs to the chaperonin (HSP60) family. Forms a cylinder of 14 subunits composed of two heptameric rings stacked back-to-back. Interacts with the co-chaperonin GroES.

The protein resides in the cytoplasm. The enzyme catalyses ATP + H2O + a folded polypeptide = ADP + phosphate + an unfolded polypeptide.. Together with its co-chaperonin GroES, plays an essential role in assisting protein folding. The GroEL-GroES system forms a nano-cage that allows encapsulation of the non-native substrate proteins and provides a physical environment optimized to promote and accelerate protein folding. The protein is Chaperonin GroEL 2 of Chromobacterium violaceum (strain ATCC 12472 / DSM 30191 / JCM 1249 / CCUG 213 / NBRC 12614 / NCIMB 9131 / NCTC 9757 / MK).